A 129-amino-acid chain; its full sequence is Small ribosomal subunit protein uS11 (129 aa).

It belongs to the universal ribosomal protein uS11 family. As to quaternary structure, part of the 30S ribosomal subunit. Interacts with proteins S7 and S18. Binds to IF-3.

Located on the platform of the 30S subunit, it bridges several disparate RNA helices of the 16S rRNA. Forms part of the Shine-Dalgarno cleft in the 70S ribosome. The polypeptide is Small ribosomal subunit protein uS11 (Desulforamulus reducens (strain ATCC BAA-1160 / DSM 100696 / MI-1) (Desulfotomaculum reducens)).